Here is a 123-residue protein sequence, read N- to C-terminus: Large ribosomal subunit protein uL29 (123 aa).

This sequence belongs to the universal ribosomal protein uL29 family.

The polypeptide is Large ribosomal subunit protein uL29 (RPL35) (Babesia bovis).